Reading from the N-terminus, the 445-residue chain is Putative transcription factor bHLH056 (445 aa).

Disordered regions lie at residues N36 to L70, Q224 to H260, and P365 to A445. A compositionally biased stretch (basic and acidic residues) spans S231 to R246. Residues R255–L304 form the bHLH domain. Residues Q418–S433 show a composition bias toward low complexity.

Homodimer.

The protein resides in the nucleus. The protein is Putative transcription factor bHLH056 (BHLH56) of Arabidopsis thaliana (Mouse-ear cress).